Here is a 181-residue protein sequence, read N- to C-terminus: K99 fimbrial protein (181 aa).

Positions 1–22 (MKKTLLAIILGGMAFATTNASA) are cleaved as a signal peptide. Residues Cys38 and Cys79 are joined by a disulfide bond.

Belongs to the fimbrial protein family.

The protein resides in the fimbrium. Functionally, fimbriae (also called pili), polar filaments radiating from the surface of the bacterium to a length of 0.5-1.5 micrometers and numbering 100-300 per cell, enable bacteria to colonize the epithelium of specific host organs. In terms of biological role, fanC is the main component of the K99 fimbriae. The protein is K99 fimbrial protein (fanC) of Escherichia coli.